A 628-amino-acid polypeptide reads, in one-letter code: Venom redulysin 1 (628 aa).

An N-terminal signal peptide occupies residues 1–19 (MSKLWLLLLLVAAFQAVHS). A propeptide spanning residues 20–368 (YPAAESDYLE…EDDVAESDEE (349 aa)) is cleaved from the precursor. The disordered stretch occupies residues 290–313 (DYEEEEEEEEEEEFELEEDYEEDP). Positions 291–313 (YEEEEEEEEEEEFELEEDYEEDP) are enriched in acidic residues.

Belongs to the redulysin-like family. Post-translationally, contains 5 disulfide bonds. Expressed by the venom gland (posterior main gland) (at protein level).

The protein localises to the secreted. Highly abundant protein that may be responsible for the observed disruption of sensory neuron membranes, since it is homologous to proteins such as trialysin, which forms pores in lipid bilayers. Probable insecticidal toxin. The sequence is that of Venom redulysin 1 from Platymeris rhadamanthus (Red spot assassin bug).